We begin with the raw amino-acid sequence, 283 residues long: Aldo-keto reductase MSMEG_2407/MSMEI_2346 (283 aa).

Residue tyrosine 58 is the Proton donor of the active site. The NADPH site is built by glycine 196, leucine 198, valine 200, isoleucine 236, arginine 238, serine 239, alanine 240, arginine 244, serine 247, asparagine 248, and arginine 274.

This sequence belongs to the aldo/keto reductase family. As to quaternary structure, monomer.

Inhibited by the antituberculosis drug isoniazid (INH). Functionally, catalyzes the NADPH-dependent reduction of dicarbonyls. Exhibits narrow substrate specificity, with preferential activity against the dicarbonyl substrates phenylglyoxal and methylglyoxal. Exhibits weak activity with ethyl-2-methyl acetoacetate. Cannot use NADH. May play an important role in the detoxification of methylglyoxal. The protein is Aldo-keto reductase MSMEG_2407/MSMEI_2346 of Mycolicibacterium smegmatis (strain ATCC 700084 / mc(2)155) (Mycobacterium smegmatis).